Consider the following 208-residue polypeptide: Uracil phosphoribosyltransferase (208 aa).

5-phospho-alpha-D-ribose 1-diphosphate-binding positions include arginine 78, arginine 103, and 130-138; that span reads DPMLATGGS. Uracil is bound by residues isoleucine 193 and 198 to 200; that span reads GDA. Aspartate 199 lines the 5-phospho-alpha-D-ribose 1-diphosphate pocket.

The protein belongs to the UPRTase family. Mg(2+) is required as a cofactor.

The enzyme catalyses UMP + diphosphate = 5-phospho-alpha-D-ribose 1-diphosphate + uracil. Its pathway is pyrimidine metabolism; UMP biosynthesis via salvage pathway; UMP from uracil: step 1/1. Its activity is regulated as follows. Allosterically activated by GTP. In terms of biological role, catalyzes the conversion of uracil and 5-phospho-alpha-D-ribose 1-diphosphate (PRPP) to UMP and diphosphate. The chain is Uracil phosphoribosyltransferase from Wolinella succinogenes (strain ATCC 29543 / DSM 1740 / CCUG 13145 / JCM 31913 / LMG 7466 / NCTC 11488 / FDC 602W) (Vibrio succinogenes).